A 255-amino-acid polypeptide reads, in one-letter code: F-box/SPRY domain-containing protein 1 (255 aa).

The 49-residue stretch at Asp-3 to His-51 folds into the F-box domain. The region spanning Leu-61–Leu-253 is the B30.2/SPRY domain.

It belongs to the FBXO45/Fsn family. As to quaternary structure, component of an E3 ubiquitin ligase complex composed of hiw and Fsn.

The protein localises to the synapse. The protein operates within protein modification; protein ubiquitination. Its function is as follows. Required in the presynaptic motoneuron to down-regulate the levels of wnd and restrain synaptic terminal growth at the neuromuscular junction (NMJ). In Drosophila simulans (Fruit fly), this protein is F-box/SPRY domain-containing protein 1.